We begin with the raw amino-acid sequence, 225 residues long: 2-amino-5-formylamino-6-ribosylaminopyrimidin-4(3H)-one 5'-monophosphate deformylase (225 aa).

Residues Glu-28, His-30, Asp-39, and His-107 each contribute to the Fe cation site.

This sequence belongs to the creatininase superfamily. FAPy deformylase family. Homodimer. The cofactor is Fe(2+). Zn(2+) is required as a cofactor.

The enzyme catalyses 2-amino-5-formylamino-6-(5-phospho-D-ribosylamino)pyrimidin-4(3H)-one + H2O = 2,5-diamino-6-(1-D-ribosylamino)pyrimidin-4(3H)-one 5'-phosphate + formate + H(+). Its pathway is cofactor biosynthesis; coenzyme F420 biosynthesis. The protein operates within cofactor biosynthesis; riboflavin biosynthesis. Its function is as follows. Catalyzes the hydrolysis of the formamide of 2-amino-5-formylamino-6-ribosylamino-4(3H)-pyrimidinone 5'-monophosphate (FAPy) to form 2,5-diamino-6-ribosylamino-4(3H)-pyrimidinone 5'-phosphate (APy). The chain is 2-amino-5-formylamino-6-ribosylaminopyrimidin-4(3H)-one 5'-monophosphate deformylase from Methanocaldococcus sp. (strain FS406-22).